A 347-amino-acid chain; its full sequence is Putative adhesin P1-like protein MPN_099 (347 aa).

The segment covering 282 to 300 has biased composition (polar residues); the sequence is FGTDHSTQPQPQSLKTTTP. The tract at residues 282–302 is disordered; sequence FGTDHSTQPQPQSLKTTTPVF.

It belongs to the adhesin P1 family.

The chain is Putative adhesin P1-like protein MPN_099 from Mycoplasma pneumoniae (strain ATCC 29342 / M129 / Subtype 1) (Mycoplasmoides pneumoniae).